Reading from the N-terminus, the 217-residue chain is Large ribosomal subunit protein eL14 (217 aa).

Position 79 is an N6-acetyllysine (Lys79). N6-acetyllysine; alternate is present on Lys85. Residue Lys85 is modified to N6-succinyllysine; alternate. Residue Lys124 forms a Glycyl lysine isopeptide (Lys-Gly) (interchain with G-Cter in SUMO2) linkage. Residue Ser139 is modified to Phosphoserine. The interval 162–217 is disordered; that stretch reads KVPAKKATGPGKKAAGQKAPAQKAAGQKAAPPAKGQKGQKTPAQKAPAPKAAGKKA. A 1-1; approximate repeat occupies 173-177; it reads KKAAG. Positions 173–192 are 4 X 5 AA tandem repeats of Q-K-A-[APS]-X; sequence KKAAGQKAPAQKAAGQKAAP. A run of 5 repeats spans residues 178–182, 183–187, 188–192, 195–197, and 198–200. The segment at 195-200 is 2 X 3 AA tandem repeats of K-G-Q; the sequence is KGQKGQ. Lys206 carries the N6-succinyllysine modification.

The protein belongs to the eukaryotic ribosomal protein eL14 family. Component of the large ribosomal subunit.

The protein localises to the cytoplasm. Its function is as follows. Component of the large ribosomal subunit. The ribosome is a large ribonucleoprotein complex responsible for the synthesis of proteins in the cell. This chain is Large ribosomal subunit protein eL14 (Rpl14), found in Mus musculus (Mouse).